A 244-amino-acid polypeptide reads, in one-letter code: 3-deoxy-manno-octulosonate cytidylyltransferase (244 aa).

The protein belongs to the KdsB family.

The protein resides in the cytoplasm. The enzyme catalyses 3-deoxy-alpha-D-manno-oct-2-ulosonate + CTP = CMP-3-deoxy-beta-D-manno-octulosonate + diphosphate. It participates in nucleotide-sugar biosynthesis; CMP-3-deoxy-D-manno-octulosonate biosynthesis; CMP-3-deoxy-D-manno-octulosonate from 3-deoxy-D-manno-octulosonate and CTP: step 1/1. Its pathway is bacterial outer membrane biogenesis; lipopolysaccharide biosynthesis. Activates KDO (a required 8-carbon sugar) for incorporation into bacterial lipopolysaccharide in Gram-negative bacteria. The polypeptide is 3-deoxy-manno-octulosonate cytidylyltransferase (Vesicomyosocius okutanii subsp. Calyptogena okutanii (strain HA)).